Consider the following 78-residue polypeptide: Defensin-like protein 287 (78 aa).

The first 24 residues, 1–24 (MNNLRVIMSVLLAVLVFTATVSES), serve as a signal peptide directing secretion. Cystine bridges form between Cys-39–Cys-59, Cys-45–Cys-64, and Cys-51–Cys-66.

This sequence belongs to the DEFL family.

It localises to the secreted. This is Defensin-like protein 287 from Arabidopsis thaliana (Mouse-ear cress).